Reading from the N-terminus, the 188-residue chain is Adenine phosphoribosyltransferase (188 aa).

It belongs to the purine/pyrimidine phosphoribosyltransferase family. Homodimer.

It localises to the cytoplasm. The enzyme catalyses AMP + diphosphate = 5-phospho-alpha-D-ribose 1-diphosphate + adenine. It functions in the pathway purine metabolism; AMP biosynthesis via salvage pathway; AMP from adenine: step 1/1. In terms of biological role, catalyzes a salvage reaction resulting in the formation of AMP, that is energically less costly than de novo synthesis. The protein is Adenine phosphoribosyltransferase of Burkholderia vietnamiensis (strain G4 / LMG 22486) (Burkholderia cepacia (strain R1808)).